The following is a 144-amino-acid chain: Maximins 5/H4 type 3 (144 aa).

A signal peptide spans 1 to 18 (MNFKYIVAVSFLIASAYA). 2 consecutive propeptides follow at residues 19–43 (RSVQ…REIR) and 74–123 (TAED…KEKR). The residue at position 143 (Leu143) is a Leucine amide.

This sequence belongs to the bombinin family. Expressed by the skin glands.

It localises to the secreted. Its function is as follows. Maximin-5 shows antibacterial activity against both Gram-positive and Gram-negative bacteria. The only exception is the resistance of E.coli. Also shows antimicrobial activity against fungi C.albicans, A.flavus and P.uticale. It has little hemolytic activity. It does not possess a significant cytotoxicity against tumor cell lines. It does not possess a significant anti-HIV activity. Functionally, maximin-H4 shows antibacterial activity against both Gram-positive and Gram-negative bacteria. It also shows antimicrobial activity against the fungus C.albicans. Shows strong hemolytic activity. This chain is Maximins 5/H4 type 3, found in Bombina maxima (Giant fire-bellied toad).